Here is a 499-residue protein sequence, read N- to C-terminus: Trichoplein keratin filament-binding protein (499 aa).

Coiled coils occupy residues 17 to 143 (LEQQ…LYEQ), 169 to 304 (EQIT…LSAL), and 405 to 485 (NRER…TQRG). The trichohyalin/plectin homology domain stretch occupies residues 260–426 (RKMEQCRKKT…RQFTSREKKQ (167 aa)).

The protein belongs to the TCHP family.

Its subcellular location is the cytoplasm. It localises to the cytoskeleton. The protein localises to the microtubule organizing center. The protein resides in the centrosome. In terms of biological role, may act as a 'capping' or 'branching' protein for keratin filaments in the cell periphery. May regulate K8/K18 filament and desmosome organization mainly at the apical or peripheral regions of simple epithelial cells. This chain is Trichoplein keratin filament-binding protein, found in Xenopus laevis (African clawed frog).